Reading from the N-terminus, the 253-residue chain is Ribosomal RNA small subunit methyltransferase J (253 aa).

S-adenosyl-L-methionine-binding positions include 101 to 102, 117 to 118, and Asp-169; these read RD and ER.

This sequence belongs to the methyltransferase superfamily. RsmJ family.

It localises to the cytoplasm. The catalysed reaction is guanosine(1516) in 16S rRNA + S-adenosyl-L-methionine = N(2)-methylguanosine(1516) in 16S rRNA + S-adenosyl-L-homocysteine + H(+). Its function is as follows. Specifically methylates the guanosine in position 1516 of 16S rRNA. This is Ribosomal RNA small subunit methyltransferase J from Psychromonas ingrahamii (strain DSM 17664 / CCUG 51855 / 37).